Reading from the N-terminus, the 569-residue chain is Potassium-transporting ATPase potassium-binding subunit (569 aa).

The next 10 membrane-spanning stretches (helical) occupy residues 3 to 23, 68 to 88, 136 to 156, 179 to 199, 259 to 279, 284 to 304, 384 to 404, 422 to 442, 490 to 510, and 534 to 554; these read LMEY…SPVL, AASL…VLML, VGLA…AVAV, VLYV…GQGV, LQML…GEAV, HAWT…LSLY, GLYG…LMVG, AMLA…VAAV, LALA…GVAG, and LLLT…ALAL.

This sequence belongs to the KdpA family. In terms of assembly, the system is composed of three essential subunits: KdpA, KdpB and KdpC.

It localises to the cell inner membrane. In terms of biological role, part of the high-affinity ATP-driven potassium transport (or Kdp) system, which catalyzes the hydrolysis of ATP coupled with the electrogenic transport of potassium into the cytoplasm. This subunit binds the periplasmic potassium ions and delivers the ions to the membrane domain of KdpB through an intramembrane tunnel. This Nitratidesulfovibrio vulgaris (strain DP4) (Desulfovibrio vulgaris) protein is Potassium-transporting ATPase potassium-binding subunit.